The following is a 205-amino-acid chain: Nitrophorin-7 (205 aa).

A signal peptide spans 1 to 20; it reads MELYTALLAVTILSPSSIVG. Cystine bridges form between cysteine 25/cysteine 144 and cysteine 62/cysteine 193. Aspartate 52 is a binding site for histamine. 2 residues coordinate heme: histidine 80 and asparagine 91. Residue aspartate 154 coordinates histamine.

This sequence belongs to the calycin superfamily. Nitrophorin family. As to quaternary structure, forms oligomers (at pH 5.5). It depends on heme b as a cofactor. As to expression, expressed in the endothelial cells of the salivary glands.

Its subcellular location is the secreted. It carries out the reaction 3 nitrite + 2 H(+) = 2 nitric oxide + nitrate + H2O. Converts nitrite as the sole substrate to form nitric oxide gas (NO). NO(2-) serves both as an electron donor and as an electron acceptor. Binds to negatively charged cell surfaces of activated platelets; binds to L-a-phosphatidyl-L-serine (PS)-bearing phospholipid membranes. Once bound on an activated platelet, NP7 releases its stored nitric oxide gas (NO) into the victim's tissues while feeding, resulting in vasodilation and inhibition of platelet aggregation. Also acts as an anticoagulant by blocking coagulation-factor binding sites. Has antihistamine activity; binds histamine with high affinity. This chain is Nitrophorin-7, found in Rhodnius prolixus (Triatomid bug).